The sequence spans 368 residues: Probable multidrug ABC transporter permease YbhR (368 aa).

The Cytoplasmic portion of the chain corresponds to 1–24 (MFHRLWTLIRKELQSLLREPQTRA). A helical membrane pass occupies residues 25 to 45 (ILILPVLIQVILFPFAATLEV). Over 46–173 (TNATIAIYDE…WYNPNLDYKW (128 aa)) the chain is Periplasmic. Residues 129-366 (AQIAANYLQQ…SAAYAMFRRK (238 aa)) enclose the ABC transmembrane type-2 domain. A helical membrane pass occupies residues 174–194 (FVVPSLIAMITTIGVMIVTSL). The Cytoplasmic segment spans residues 195–222 (SVAREREQGTLDQLLVSPLTTWQIFIGK). A helical transmembrane segment spans residues 223 to 243 (AVPALIVATFQATIVLAIGIW). The Periplasmic segment spans residues 244-253 (AYQIPFAGSL). The chain crosses the membrane as a helical span at residues 254–274 (ALFYFTMVIYGLSLVGFGLLI). The Cytoplasmic portion of the chain corresponds to 275–284 (SSLCSTQQQA). Residues 285-305 (FIGVFVFMMPAILLSGYVSPV) form a helical membrane-spanning segment. The Periplasmic portion of the chain corresponds to 306-339 (ENMPVWLQNLTWINPIRHFTDITKQIYLKDASLD). A helical transmembrane segment spans residues 340–360 (IVWNSLWPLLVITATTGSAAY). At 361-368 (AMFRRKVM) the chain is on the cytoplasmic side.

This sequence belongs to the ABC-2 integral membrane protein family. The complex is probably composed of two ATP-binding proteins (YbhF) and two transmembrane proteins (YbhR and YbhS).

It localises to the cell inner membrane. Its function is as follows. Part of the ABC transporter complex YbhFSR that could be involved in efflux of cefoperazone. Probably involved in the translocation of the substrate across the membrane. The protein is Probable multidrug ABC transporter permease YbhR (ybhR) of Escherichia coli O157:H7.